The chain runs to 49 residues: Large ribosomal subunit protein bL32 (49 aa).

This sequence belongs to the bacterial ribosomal protein bL32 family.

The protein is Large ribosomal subunit protein bL32 of Nitratiruptor sp. (strain SB155-2).